The following is a 447-amino-acid chain: Na(+)-translocating NADH-quinone reductase subunit A (447 aa).

The protein belongs to the NqrA family. Composed of six subunits; NqrA, NqrB, NqrC, NqrD, NqrE and NqrF.

The enzyme catalyses a ubiquinone + n Na(+)(in) + NADH + H(+) = a ubiquinol + n Na(+)(out) + NAD(+). Functionally, NQR complex catalyzes the reduction of ubiquinone-1 to ubiquinol by two successive reactions, coupled with the transport of Na(+) ions from the cytoplasm to the periplasm. NqrA to NqrE are probably involved in the second step, the conversion of ubisemiquinone to ubiquinol. The polypeptide is Na(+)-translocating NADH-quinone reductase subunit A (Yersinia pestis).